Here is a 148-residue protein sequence, read N- to C-terminus: Large ribosomal subunit protein bL9 (148 aa).

Belongs to the bacterial ribosomal protein bL9 family.

In terms of biological role, binds to the 23S rRNA. This chain is Large ribosomal subunit protein bL9, found in Pseudomonas putida (strain ATCC 700007 / DSM 6899 / JCM 31910 / BCRC 17059 / LMG 24140 / F1).